The chain runs to 60 residues: Large ribosomal subunit protein bL32 (60 aa).

Residues 1 to 23 are disordered; sequence MAVPKRKKSKSRRNMHRSHHAIK.

The protein belongs to the bacterial ribosomal protein bL32 family.

The protein is Large ribosomal subunit protein bL32 of Wolbachia pipientis subsp. Culex pipiens (strain wPip).